Here is a 259-residue protein sequence, read N- to C-terminus: Dihydroorotate dehydrogenase B (NAD(+)), electron transfer subunit (259 aa).

One can recognise an FAD-binding FR-type domain in the interval 2-102 (MQKQNMIVVN…LGPLGHGFPV (101 aa)). Residues 53-56 (RPIS), 70-72 (LYR), and 77-78 (GT) each bind FAD. Positions 221, 226, 229, and 246 each coordinate [2Fe-2S] cluster.

This sequence belongs to the PyrK family. Heterotetramer of 2 PyrK and 2 PyrD type B subunits. It depends on [2Fe-2S] cluster as a cofactor. The cofactor is FAD.

It functions in the pathway pyrimidine metabolism; UMP biosynthesis via de novo pathway; orotate from (S)-dihydroorotate (NAD(+) route): step 1/1. Responsible for channeling the electrons from the oxidation of dihydroorotate from the FMN redox center in the PyrD type B subunit to the ultimate electron acceptor NAD(+). This chain is Dihydroorotate dehydrogenase B (NAD(+)), electron transfer subunit, found in Bacillus cereus (strain ZK / E33L).